The sequence spans 221 residues: Large ribosomal subunit protein uL4 (221 aa).

The segment at 45–100 (ARQGTHKTKNRGEVSGAGRKPFKQKGTGRARQGSIRAPQMTGGGIVHGPTPRDYSQ) is disordered.

It belongs to the universal ribosomal protein uL4 family. As to quaternary structure, part of the 50S ribosomal subunit.

In terms of biological role, one of the primary rRNA binding proteins, this protein initially binds near the 5'-end of the 23S rRNA. It is important during the early stages of 50S assembly. It makes multiple contacts with different domains of the 23S rRNA in the assembled 50S subunit and ribosome. Functionally, forms part of the polypeptide exit tunnel. This Leifsonia xyli subsp. xyli (strain CTCB07) protein is Large ribosomal subunit protein uL4.